The sequence spans 339 residues: Scoulerine-9-O-methyltransferase 3 (339 aa).

Residue methionine 161 coordinates S-adenosyl-L-methionine. Aspartate 164 serves as a coordination point for substrate. Residues threonine 165, glycine 191, aspartate 214, 228–229, and lysine 242 each bind S-adenosyl-L-methionine; that span reads DV. 243-247 provides a ligand contact to substrate; it reads SILHE. The Proton acceptor role is filled by histidine 246.

The protein belongs to the class I-like SAM-binding methyltransferase superfamily. Cation-independent O-methyltransferase family. COMT subfamily. Homodimer. Forms heterodimer with SOMT2. The heterodimer SOMT2-SOMT3 possesses 3-O-acetyl-4'-O-demethylpapaveroxine 4'-O-methyltransferase activity, where SOMT2 is the catalytic subunit. In terms of tissue distribution, highly expressed in capsules. Expressed is stems. Expressed at low levels in roots.

The catalysed reaction is (S)-scoulerine + S-adenosyl-L-methionine = (S)-tetrahydrocolumbamine + S-adenosyl-L-homocysteine + H(+). It functions in the pathway alkaloid biosynthesis. Its function is as follows. Methyltransferase involved in the biosynthesis of the benzylisoquinoline alkaloid noscapine. Catalyzes the conversion of (S)-scoulerine to (S)-tetrahydrocolumbamine. The sequence is that of Scoulerine-9-O-methyltransferase 3 from Papaver somniferum (Opium poppy).